The following is a 440-amino-acid chain: Putative F-box/LRR-repeat protein At5g15620 (440 aa).

In terms of domain architecture, F-box spans 1–52 (MDRFSNLPDDVIYHIVSFLSAKEATCLKFVSKNFQNLVTIKRNVVFHHWESF). LRR repeat units lie at residues 4–31 (FSNLPDDVIYHIVSFLSAKEATCLKFVS), 126–153 (LKLGCGFVIDILPKNALLPALKTLILDS), 156–181 (FYASDGCAFTRLLSASPVLEELVIDR), 194–205 (SSPTLKRLTLRR), 210–235 (PEPETWTDFESVSFDTPSLAYLKYKD), 264–289 (YWLNRSADPSNLIRGLKNVEILSIKV), and 318–343 (EADFCWDPLQILLEKSPNLKTLTIEG).

The polypeptide is Putative F-box/LRR-repeat protein At5g15620 (Arabidopsis thaliana (Mouse-ear cress)).